A 305-amino-acid chain; its full sequence is Probable 2-methylisocitrate lyase 1 (305 aa).

Substrate is bound at residue serine 52 to alanine 54. Mg(2+)-binding residues include aspartate 91 and aspartate 93. Residues cysteine 128–glycine 129, arginine 163, glutamate 193, asparagine 216–threonine 218, arginine 247, and arginine 276 contribute to the substrate site.

Belongs to the isocitrate lyase/PEP mutase superfamily. Methylisocitrate lyase family. In terms of assembly, homotetramer; dimer of dimers. Requires Mg(2+) as cofactor.

It catalyses the reaction (2S,3R)-3-hydroxybutane-1,2,3-tricarboxylate = pyruvate + succinate. Functionally, catalyzes the thermodynamically favored C-C bond cleavage of (2R,3S)-2-methylisocitrate to yield pyruvate and succinate via an alpha-carboxy-carbanion intermediate. The sequence is that of Probable 2-methylisocitrate lyase 1 from Corynebacterium glutamicum (strain ATCC 13032 / DSM 20300 / JCM 1318 / BCRC 11384 / CCUG 27702 / LMG 3730 / NBRC 12168 / NCIMB 10025 / NRRL B-2784 / 534).